A 499-amino-acid chain; its full sequence is Potassium channel subfamily K member 5 (499 aa).

Over 1-7 the chain is Cytoplasmic; sequence MVDRGPL. Residues 8-26 traverse the membrane as a helical segment; sequence LTSAIIFYLAIGAAIFEVL. Asn-77 carries an N-linked (GlcNAc...) asparagine glycan. Positions 85–112 form an intramembrane region, pore-forming; it reads WPNAMIFAATVITTIGYGNVAPKTPAGR. Residues Thr-98, Ile-99, Gly-100, and Tyr-101 each contribute to the K(+) site. The interval 98–103 is selectivity filter 1; that stretch reads TIGYGN. A helical membrane pass occupies residues 113 to 133; that stretch reads LFCVFYGLFGVPLCLTWISAL. At 134 to 157 the chain is on the cytoplasmic side; the sequence is GKFFGGRAKRLGQFLTKRGVSLRK. A helical transmembrane segment spans residues 158-180; sequence AQITCTVIFIVWGVLVHLVIPPF. An intramembrane region (pore-forming) is located at residues 190–215; sequence YIEGLYYSFITISTIGFGDFVAGVNP. K(+)-binding residues include Thr-203, Ile-204, Gly-205, and Phe-206. The interval 203-208 is selectivity filter 2; it reads TIGFGD. A helical membrane pass occupies residues 230–250; sequence WIYLGLAWLSLFVNWKVSMFV. The Cytoplasmic segment spans residues 251-325; the sequence is EVHKAIKKRR…SGGGETGPGP (75 aa). Disordered regions lie at residues 312-335, 360-388, and 428-499; these read AMKT…GGLP, QTLR…SPAP, and GLSD…PKGT. Over residues 316–334 the composition is skewed to gly residues; it reads SGGGETGPGPGLGPQGGGL. Basic and acidic residues predominate over residues 370 to 382; it reads RSPDEEAVARAPE. Residue Ser-371 is modified to Phosphoserine. The span at 466 to 480 shows a compositional bias: low complexity; sequence SSSESTFTSTESELS.

The protein belongs to the two pore domain potassium channel (TC 1.A.1.8) family. In terms of assembly, homodimer; disulfide-linked. Heterodimer with KCNK16 and KCNK17. In terms of tissue distribution, abundant expression in kidney, also detected in liver, placenta and small intestine. In the kidney, expression is restricted to the distal tubules and collecting ducts. Not expressed in proximal tubules or glomeruli. Expressed in pancreas, in both endocrine (alpha, beta, gamma, delta, and epsilon) and exocrine (acinar and ductal) cells.

It is found in the membrane. The catalysed reaction is K(+)(in) = K(+)(out). With respect to regulation, the channel conductance is stimulated by extracellular alkaline pH. Inhibited by quinine, quinidine and external acidification. K(+) channel that conducts voltage-dependent outward rectifying currents upon membrane depolarization. Voltage sensing is coupled to K(+) electrochemical gradient in an 'ion flux gating' mode where outward but not inward ion flow opens the gate. Homo- and heterodimerizes to form functional channels with distinct regulatory and gating properties. The polypeptide is Potassium channel subfamily K member 5 (Homo sapiens (Human)).